Here is a 458-residue protein sequence, read N- to C-terminus: Phosphoglucosamine mutase (458 aa).

Ser-108 serves as the catalytic Phosphoserine intermediate. Positions 108, 247, 249, and 251 each coordinate Mg(2+). A Phosphoserine modification is found at Ser-108.

It belongs to the phosphohexose mutase family. It depends on Mg(2+) as a cofactor. In terms of processing, activated by phosphorylation.

The catalysed reaction is alpha-D-glucosamine 1-phosphate = D-glucosamine 6-phosphate. Functionally, catalyzes the conversion of glucosamine-6-phosphate to glucosamine-1-phosphate. This chain is Phosphoglucosamine mutase, found in Nitrosomonas europaea (strain ATCC 19718 / CIP 103999 / KCTC 2705 / NBRC 14298).